Consider the following 440-residue polypeptide: Tetratricopeptide repeat protein 5 (440 aa).

TPR repeat units lie at residues 7 to 61 (EEAK…EEVL), 68 to 98 (AQALMLKGKALNVTPDYSPEAEVLLSKAVKL), 103 to 130 (VEAWNQLGEVYWKKGDVASAHTCFSGAL), 136 to 174 (KVSLQNLSMVLRQLQTDSGDEHSRHVMDSVRQAKLAVQM), and 179 to 216 (GRSWYILGNAYLSLYFNTGQNPKISQQALSAYAQAEKV). A Nuclear export signal motif is present at residues 13-24 (LQKLQGLVDRLY). At S203 the chain carries Phosphoserine; by ATM. A Phosphoserine; by CHEK2 modification is found at S221. The TPR 6 repeat unit spans residues 224-253 (PDLHLNRATLHKYEESYGEALEGFSQAAAL). The tract at residues 285–287 (KPK) is mediates interaction with 28S rRNA of ribosome-coding tubulin.

In terms of assembly, interacts with JMY and p300/EP300; the interaction occurs in the nucleus and augments the association between JMY and p300/EP300 in response to DNA damage. Interacts with PRMT5; the interaction is DNA damage-dependent and promotes PRMT5 interaction with p53/TP53 and subsequent methylation. Forms a complex with HSF1 and p300/EP300; these interactions augment chromatin-bound HSF1 and p300/EP300 histone acetyltransferase activity, resulting in enhanced heat-shock-responsive transcription. Interacts with JMY; the interaction occurs in the cytoplasm and results in the inhibition of JYM's nucleation activity. Interacts with ribosome-coding tubulin (via 60S subunit 28S rRNA and protein uL24/RPL26) and the N-terminal of nascent tubulin polypeptide (via alpha-tubulin MREC motif and beta-tubulin MREI motif); these interactions result in tubulin mRNA-targeted degradation. Interacts with ATP5F1B; the interaction occurs in the mitochondria and results in ATP production decrease. Interacts with p53/TP53; the interaction occurs in the mitochondria and results in increased apoptosis. Post-translationally, phosphorylation by ATM kinase induces nuclear accumulation while interfering with nuclear export, and phosphorylation by CHEK2 kinase enhances nuclear stability. Expressed in heart, brain, spleen, lung, liver, skeletal muscle, kidney and testis.

It localises to the nucleus. The protein resides in the cytoplasm. Its subcellular location is the cytoplasmic vesicle. It is found in the mitochondrion matrix. Cofactor involved in the regulation of various cellular mechanisms such as actin regulation, autophagy, chromatin regulation and DNA repair. In physiological conditions, interacts with cofactor JMY in the cytoplasm which prevents JMY's actin nucleation activity and ability to activate the Arp2/3 complex. Acts as a negative regulator of nutrient stress-induced autophagy by inhibiting JMY's interaction with MAP1LC3B, thereby preventing autophagosome formation. Involves in tubulin autoregulation by promoting its degradation in response to excess soluble tubulin. To do so, associates with the active ribosome near the ribosome exit tunnel and with nascent tubulin polypeptides early during their translation, triggering tubulin mRNA-targeted degradation. Following DNA damage, phosphorylated by DNA damage responsive protein kinases ATM and CHEK2, leading to its nuclear accumulation and stability. Nuclear TTC5/STRAP promotes the assembly of a stress-responsive p53/TP53 coactivator complex, which includes the coactivators JMY and p300, thereby increasing p53/TP53-dependent transcription and apoptosis. Also recruits arginine methyltransferase PRMT5 to p53/TP53 when DNA is damaged, allowing PRMT5 to methylate p53/TP53. In DNA stress conditions, also prevents p53/TP53 degradation by E3 ubiquitin ligase MDM2. Upon heat-shock stress, forms a chromatin-associated complex with heat-shock factor 1 HSF1 and p300/EP300 to stimulate heat-shock-responsive transcription, thereby increasing cell survival. Mitochondrial TTC5/STRAP interacts with ATP synthase subunit beta ATP5F1B which decreased ATP synthase activity and lowers mitochondrial ATP production, thereby regulating cellular respiration and mitochondrial-dependent apoptosis. Mitochondrial TTC5/STRAP also regulates p53/TP53-mediated apoptosis. The chain is Tetratricopeptide repeat protein 5 from Mus musculus (Mouse).